The chain runs to 186 residues: Inner membrane-spanning protein YciB (186 aa).

The next 5 helical transmembrane spans lie at Ile10–Ile30, Val47–Leu67, Trp76–Phe96, Trp121–Phe141, and Phe149–Leu169.

It belongs to the YciB family.

Its subcellular location is the cell inner membrane. Functionally, plays a role in cell envelope biogenesis, maintenance of cell envelope integrity and membrane homeostasis. The protein is Inner membrane-spanning protein YciB of Acidovorax sp. (strain JS42).